Consider the following 314-residue polypeptide: Serine/threonine-protein phosphatase PP-Y (314 aa).

Asp-60, His-62, Asp-88, and Asn-120 together coordinate Mn(2+). His-121 acts as the Proton donor in catalysis. Mn(2+) contacts are provided by His-169 and His-244.

The protein belongs to the PPP phosphatase family. PP-Y subfamily. Requires Mn(2+) as cofactor.

It carries out the reaction O-phospho-L-seryl-[protein] + H2O = L-seryl-[protein] + phosphate. It catalyses the reaction O-phospho-L-threonyl-[protein] + H2O = L-threonyl-[protein] + phosphate. This is Serine/threonine-protein phosphatase PP-Y (PpY-55A) from Drosophila melanogaster (Fruit fly).